The following is a 315-amino-acid chain: Cytochrome f (315 aa).

Residues 1–30 form the signal peptide; sequence MRTFLKFSTLVSKGVLVLVCSFFLTASSNA. Positions 31, 51, 54, and 55 each coordinate heme. A helical transmembrane segment spans residues 281–300; the sequence is IQGLLVFFLFVLLAQVFLVL.

The protein belongs to the cytochrome f family. In terms of assembly, the 4 large subunits of the cytochrome b6-f complex are cytochrome b6, subunit IV (17 kDa polypeptide, petD), cytochrome f and the Rieske protein, while the 4 small subunits are PetG, PetL, PetM and PetN. The complex functions as a dimer. The cofactor is heme.

Its subcellular location is the plastid. The protein resides in the chloroplast thylakoid membrane. Functionally, component of the cytochrome b6-f complex, which mediates electron transfer between photosystem II (PSII) and photosystem I (PSI), cyclic electron flow around PSI, and state transitions. This Chlorella vulgaris (Green alga) protein is Cytochrome f (petA).